The primary structure comprises 63 residues: Small ribosomal subunit protein bS21 (63 aa).

This sequence belongs to the bacterial ribosomal protein bS21 family.

The chain is Small ribosomal subunit protein bS21 from Parabacteroides distasonis (strain ATCC 8503 / DSM 20701 / CIP 104284 / JCM 5825 / NCTC 11152).